The chain runs to 59 residues: uncharacterized protein (59 aa).

This is an uncharacterized protein from Rickettsia conorii (strain ATCC VR-613 / Malish 7).